A 428-amino-acid polypeptide reads, in one-letter code: MEQLLLQPIAKVDGEINLPGSKSLSNRALLLAALAQGTTTLTNLLDSDDIRHMLNALKKLGVNYQLSKDKKQCVVEGLGRAFNTAESGLLELFLGNAGTAMRPLCAALCLGQGEYILTGEARMFERPIGSLVDALQQAGAQVTYLENENYPPLKIKGTGLKGGKIKIDGSVSSQFLTAFLMAAPMAMEDTEIEIVGELVSKPYIKITLQIMHDFGIDVDNHNFERFIIKGKQTYSAPGHYLVEGDASSASYFLAAGAIAGGCIKVTGIGKKSVQGDIQFADALEAMGAKIEWGDDYIKASKGELKAIDMDMNHIPDAAMTIAVAALFATGTTKIRNVYNWRVKETDRLYAMATELRKVGATVVEGHDFIEVTAPEKLIHAEIDTYDDHRMAMCFSLVALGNTQVTINDPKCTSKTFPDYFEKLASVSC.

Residues K22, S23, and R27 each coordinate 3-phosphoshikimate. Phosphoenolpyruvate is bound at residue K22. Positions 98 and 126 each coordinate phosphoenolpyruvate. 7 residues coordinate 3-phosphoshikimate: S172, S173, Q174, S200, D316, N339, and K343. Residue Q174 participates in phosphoenolpyruvate binding. The active-site Proton acceptor is the D316. Residues R347, R389, and K414 each contribute to the phosphoenolpyruvate site.

It belongs to the EPSP synthase family. Monomer.

It is found in the cytoplasm. The enzyme catalyses 3-phosphoshikimate + phosphoenolpyruvate = 5-O-(1-carboxyvinyl)-3-phosphoshikimate + phosphate. The protein operates within metabolic intermediate biosynthesis; chorismate biosynthesis; chorismate from D-erythrose 4-phosphate and phosphoenolpyruvate: step 6/7. Functionally, catalyzes the transfer of the enolpyruvyl moiety of phosphoenolpyruvate (PEP) to the 5-hydroxyl of shikimate-3-phosphate (S3P) to produce enolpyruvyl shikimate-3-phosphate and inorganic phosphate. The chain is 3-phosphoshikimate 1-carboxyvinyltransferase from Psychromonas ingrahamii (strain DSM 17664 / CCUG 51855 / 37).